The chain runs to 681 residues: PTS system glucose-specific EIICBA component (681 aa).

Residues 3–414 (KKLFGQLQRI…LKYKTPGRED (412 aa)) enclose the PTS EIIC type-1 domain. 10 helical membrane passes run 16–36 (LMLP…GTAM), 73–93 (MIFA…AAIA), 126–146 (ILGI…GALA), 170–190 (FVPI…ALIW), 199–219 (AFST…FGFI), 273–293 (FMQG…LAIY), 303–323 (VVAG…ITEP), 328–348 (FLFV…LSFL), 355–375 (LHLG…GILP), and 383–403 (VIPV…FLIV). One can recognise a PTS EIIB type-1 domain in the interval 425–506 (TELPYAVLEA…QQIMNGQVVE (82 aa)). The active-site Phosphocysteine intermediate; for EIIB activity is the Cys-447. Residues 551–655 (DQVFSEKMMG…SDITPIIVTQ (105 aa)) enclose the PTS EIIA type-1 domain. His-603 serves as the catalytic Tele-phosphohistidine intermediate; for EIIA activity.

The protein resides in the cell membrane. The enzyme catalyses N(pros)-phospho-L-histidyl-[protein] + D-glucose(out) = D-glucose 6-phosphate(in) + L-histidyl-[protein]. Its function is as follows. The phosphoenolpyruvate-dependent sugar phosphotransferase system (sugar PTS), a major carbohydrate active transport system, catalyzes the phosphorylation of incoming sugar substrates concomitantly with their translocation across the cell membrane. This system is involved in glucose transport. In Staphylococcus aureus (strain MRSA252), this protein is PTS system glucose-specific EIICBA component (ptsG).